Here is a 490-residue protein sequence, read N- to C-terminus: GTPase Der (490 aa).

Residues 3–166 form the EngA-type G 1 domain; the sequence is PVIALVGRPN…IALSEFPKDD (164 aa). GTP is bound by residues 9 to 16, 56 to 60, and 118 to 121; these read GRPNVGKS, DTGGI, and NKVD. A disordered region spans residues 164–191; the sequence is KDDADEPEEGEEEIVAEGEEAKRIPGPS. A compositionally biased stretch (acidic residues) spans 166–181; the sequence is DADEPEEGEEEIVAEG. Positions 182-191 are enriched in basic and acidic residues; sequence EEAKRIPGPS. In terms of domain architecture, EngA-type G 2 spans 196–369; that stretch reads IKIAIIGRPN…SVQNSFKSAV (174 aa). GTP-binding positions include 202 to 209, 249 to 253, and 314 to 317; these read GRPNVGKS, DTAGV, and NKWD. Residues 370 to 454 enclose the KH-like domain; the sequence is TRWPTSRLTQ…PIRIEFKGGE (85 aa). Residues 452-490 form a disordered region; that stretch reads GGENPYEGNKNTLTDRQVNKKRRLMSHHKKADKKRRDKR. The segment covering 470 to 490 has biased composition (basic residues); that stretch reads NKKRRLMSHHKKADKKRRDKR.

Belongs to the TRAFAC class TrmE-Era-EngA-EngB-Septin-like GTPase superfamily. EngA (Der) GTPase family. Associates with the 50S ribosomal subunit.

Its function is as follows. GTPase that plays an essential role in the late steps of ribosome biogenesis. The chain is GTPase Der from Pseudomonas fluorescens (strain ATCC BAA-477 / NRRL B-23932 / Pf-5).